A 65-amino-acid chain; its full sequence is UPF0434 protein HS_0657 (65 aa).

It belongs to the UPF0434 family.

The sequence is that of UPF0434 protein HS_0657 from Histophilus somni (strain 129Pt) (Haemophilus somnus).